The sequence spans 103 residues: Defensin-like protein 268 (103 aa).

Residues 1-24 form the signal peptide; that stretch reads MARLIFHFVFALILAAYLLSVTDA. 4 disulfides stabilise this stretch: C44-C103, C68-C87, C74-C98, and C78-C100.

This sequence belongs to the DEFL family.

It localises to the secreted. The chain is Defensin-like protein 268 from Arabidopsis thaliana (Mouse-ear cress).